Here is a 444-residue protein sequence, read N- to C-terminus: Shufflon protein B' (444 aa).

The tract at residues 1–361 (MKKYDRGWAS…TGAILSCQSG (361 aa)) is constant region. Residues 362–444 (TWRKVGSGEL…GSITVYAICQ (83 aa)) form a variable region region.

This is Shufflon protein B' from Escherichia coli.